Consider the following 636-residue polypeptide: Ketocytochalasin monooxygenase (636 aa).

FAD-binding positions include Asp-125, 133 to 136 (TWYW), Asp-145, Tyr-151, and Ile-195. Residue 143–145 (ACD) coordinates NADP(+). Residues 279–285 (TGASAVQ), 302–303 (RT), and 420–421 (KR) contribute to the NADP(+) site. Trp-534 contacts FAD.

It belongs to the FAD-binding monooxygenase family. It depends on FAD as a cofactor.

It carries out the reaction ketocytochalasin + NADPH + O2 + H(+) = iso-precytochalasin + NADP(+) + H2O. The enzyme catalyses iso-precytochalasin + NADPH + O2 + H(+) = cytochalasin Z16 + NADP(+) + H2O. It participates in mycotoxin biosynthesis. In terms of biological role, ketocytochalasin monooxygenase; part of the gene cluster that mediates the biosynthesis of a family of the mycotoxins cytochalasins E and K. The hybrid PKS-NRPS synthetase ccsA and the enoyl reductase ccsC are responsible for fusion of phenylalanine with an octaketide backbone and subsequent release of the stable tetramic acid precursor. The polyketide synthase module (PKS) of the PKS-NRPS ccsA is responsible for the synthesis of the octaketide backbone. The downstream nonribosomal peptide synthetase (NRPS) amidates the carboxyl end of the octaketide with a phenylalanine. A reductase-like domain (R) at the C-terminus catalyzes the reductive release of the polyketide-amino acid intermediate. Because ccsA lacks a designated enoylreductase (ER) domain, the required activity is provided the enoyl reductase ccsC. Upon formation of the 11-membered carbocycle-fused perhydroisoindolone intermediate, a number of oxidative steps are required to afford the final cytochalasin E and K, including two hydroxylations at C17 and C18, one alcohol oxidation at C17, one epoxidation at C6 and C7 and two Baeyer-Villiger oxidations. The oxidative modification at C17, C18 and the C6-C7 epoxidation are likely to be catalyzed by the two cytochrome P450 oxygenases ccsD and ccsG. CcsD may be responsible for the epoxidation of the C6-C7 double bond. CcsG may be responsible for the successive oxidative modifications at C17 and C18. The double Baeyer-Villiger oxidations of ketocytochalasin to precytochalasin and cytochalasin Z(16) are among the final steps leading to cytochalasin E and K and are catalyzed by ccsB. The first oxygen insertion step follows that of the classic BVMO mechanism, generating the ester precytochalasin. Release of precytochalasin into an aqueous environment can generate the shunt product iso-precytochalasin through spontaneous isomerization. Alternatively, precytochalasin can undergo further oxidation by ccsB to yield the in-line carbonate-containing cytochalasin Z(16). Cytochalasin Z(16) is a precursor to cytochalasin E and cytochalasin K, whereas iso-precytochalasin is a precursor to cytochalasin Z(17) and rosellichalasin. The hydrolyase ccsE may catalyze hydrolysis of epoxide bond in cytochalasin E to afford cytochalasin K. The function of ccsF has not been assigned but it may play a role in post-PKS-NRPS biosynthetic step, resistance or transport of cytochalasins and related PKS-NRPS products. The chain is Ketocytochalasin monooxygenase from Aspergillus clavatus (strain ATCC 1007 / CBS 513.65 / DSM 816 / NCTC 3887 / NRRL 1 / QM 1276 / 107).